The primary structure comprises 429 residues: Kynureninase (429 aa).

Pyridoxal 5'-phosphate-binding positions include L109, T110, 137–140 (FPSD), D222, H225, and Y247. K248 bears the N6-(pyridoxal phosphate)lysine mark. Pyridoxal 5'-phosphate-binding residues include W278 and N306.

Belongs to the kynureninase family. In terms of assembly, homodimer. The cofactor is pyridoxal 5'-phosphate.

The enzyme catalyses L-kynurenine + H2O = anthranilate + L-alanine + H(+). It carries out the reaction 3-hydroxy-L-kynurenine + H2O = 3-hydroxyanthranilate + L-alanine + H(+). Its pathway is amino-acid degradation; L-kynurenine degradation; L-alanine and anthranilate from L-kynurenine: step 1/1. It participates in cofactor biosynthesis; NAD(+) biosynthesis; quinolinate from L-kynurenine: step 2/3. Catalyzes the cleavage of L-kynurenine (L-Kyn) and L-3-hydroxykynurenine (L-3OHKyn) into anthranilic acid (AA) and 3-hydroxyanthranilic acid (3-OHAA), respectively. In Salinispora tropica (strain ATCC BAA-916 / DSM 44818 / JCM 13857 / NBRC 105044 / CNB-440), this protein is Kynureninase.